A 30-amino-acid polypeptide reads, in one-letter code: Circulin-D (30 aa).

A cross-link (cyclopeptide (Lys-Asp)) is located at residues 1–30 (KIPCGESCVWIPCVTSIFNCKCENKVCYHD). 3 disulfides stabilise this stretch: Cys4-Cys20, Cys8-Cys22, and Cys13-Cys27.

This is a cyclic peptide.

Probably participates in a plant defense mechanism. Inhibits the cytopathic effects of the human immunodeficiency virus. This Chassalia parviflora protein is Circulin-D.